Reading from the N-terminus, the 281-residue chain is NAD kinase (281 aa).

The active-site Proton acceptor is the Asp66. NAD(+) is bound by residues 66 to 67, 137 to 138, Arg148, Arg165, Asp167, and 178 to 183; these read DG, ND, and TAYSMS.

It belongs to the NAD kinase family. A divalent metal cation is required as a cofactor.

Its subcellular location is the cytoplasm. It carries out the reaction NAD(+) + ATP = ADP + NADP(+) + H(+). Functionally, involved in the regulation of the intracellular balance of NAD and NADP, and is a key enzyme in the biosynthesis of NADP. Catalyzes specifically the phosphorylation on 2'-hydroxyl of the adenosine moiety of NAD to yield NADP. In Chlorobium phaeovibrioides (strain DSM 265 / 1930) (Prosthecochloris vibrioformis (strain DSM 265)), this protein is NAD kinase.